Reading from the N-terminus, the 144-residue chain is MLIPKRVKYRKQHRGRPGGGMAKGGKEINFGEYGLMALEPAWITNRQIEAARIAMTRHIKRGGKVWIRIFPDKPITAKPAETRMGSGKGTPEYWVAVVKPGRIMFELAGVTEEVAREAMRLASHKLPIKTKFVKRGEVGEVNEG.

Positions 1–16 (MLIPKRVKYRKQHRGR) are enriched in basic residues. A disordered region spans residues 1 to 23 (MLIPKRVKYRKQHRGRPGGGMAK).

Belongs to the universal ribosomal protein uL16 family. Part of the 50S ribosomal subunit.

In terms of biological role, binds 23S rRNA and is also seen to make contacts with the A and possibly P site tRNAs. The polypeptide is Large ribosomal subunit protein uL16 (Pelotomaculum thermopropionicum (strain DSM 13744 / JCM 10971 / SI)).